We begin with the raw amino-acid sequence, 233 residues long: Purine nucleoside phosphorylase DeoD-type (233 aa).

A purine D-ribonucleoside is bound at residue H4. Residues G20, R24, R43, and 87–90 (RVGT) contribute to the phosphate site. A purine D-ribonucleoside is bound by residues 179 to 181 (EME) and 203 to 204 (SD). The Proton donor role is filled by D204.

It belongs to the PNP/UDP phosphorylase family. Homohexamer; trimer of homodimers.

The enzyme catalyses a purine D-ribonucleoside + phosphate = a purine nucleobase + alpha-D-ribose 1-phosphate. It catalyses the reaction a purine 2'-deoxy-D-ribonucleoside + phosphate = a purine nucleobase + 2-deoxy-alpha-D-ribose 1-phosphate. Functionally, catalyzes the reversible phosphorolytic breakdown of the N-glycosidic bond in the beta-(deoxy)ribonucleoside molecules, with the formation of the corresponding free purine bases and pentose-1-phosphate. The chain is Purine nucleoside phosphorylase DeoD-type from Clostridium novyi (strain NT).